Here is a 303-residue protein sequence, read N- to C-terminus: RELT-like protein 2 (303 aa).

A helical membrane pass occupies residues 15-35; the sequence is LYMLFLLVLVFFLMGLVGFMI. Disordered stretches follow at residues 46–67 and 132–303; these read CRTSRGSEPDDAQLQPPEDDDM and CLHC…AGSM. Ser52 is modified (phosphoserine). Composition is skewed to basic and acidic residues over residues 148 to 158 and 172 to 188; these read RSKEGKSRPRT and THIEKRYGLHEHRDGSP. A compositionally biased stretch (gly residues) spans 194–212; it reads GSGGGQDPGGGQGSGGGQP. A compositionally biased stretch (polar residues) spans 278–296; it reads QEANGQPSKPDTSDHQVSL.

Belongs to the RELT family. Interacts with RELT, RELL1 and OXSR1. Interacts with PLSCR1. Interacts with TRAF2. Phosphorylated in vitro by OXSR1. In terms of tissue distribution, primarily expressed in spleen, thymus, testis, peripheral blood leukocytes, brain and placenta. Not detected in prostate, ovary, small intestine, colon, heart, lung, liver, skeletal muscle, kidney and pancreas.

Its subcellular location is the cell membrane. Induces activation of MAPK14/p38 cascade, when overexpressed. Induces apoptosis, when overexpressed. The chain is RELT-like protein 2 (RELL2) from Homo sapiens (Human).